The chain runs to 504 residues: 2,3-bisphosphoglycerate-independent phosphoglycerate mutase (504 aa).

Mn(2+) contacts are provided by D11 and S61. The active-site Phosphoserine intermediate is the S61. Substrate is bound by residues H122, 152-153 (RD), R183, R189, 255-258 (RNDR), and K329. Mn(2+) contacts are provided by D396, H400, D437, H438, and H455.

Belongs to the BPG-independent phosphoglycerate mutase family. In terms of assembly, monomer. Mn(2+) is required as a cofactor.

It catalyses the reaction (2R)-2-phosphoglycerate = (2R)-3-phosphoglycerate. The protein operates within carbohydrate degradation; glycolysis; pyruvate from D-glyceraldehyde 3-phosphate: step 3/5. Catalyzes the interconversion of 2-phosphoglycerate and 3-phosphoglycerate. This Bacteroides thetaiotaomicron (strain ATCC 29148 / DSM 2079 / JCM 5827 / CCUG 10774 / NCTC 10582 / VPI-5482 / E50) protein is 2,3-bisphosphoglycerate-independent phosphoglycerate mutase.